Consider the following 363-residue polypeptide: Lovastatin nonaketide synthase, enoyl reductase component lovC (363 aa).

NADP(+)-binding positions include 51–54 (SDTK), 174–177 (STAT), 197–200 (SPHN), Tyr215, 262–263 (LN), Thr280, and 351–352 (LS). Residues 226–272 (TYTKNNLRYALDCITNVESTTFCFAAIGRAGGHYVSLNPFPEHAATR) are lovB-binding.

This sequence belongs to the zinc-containing alcohol dehydrogenase family. In terms of assembly, each MAT domain from the lovB homodimer binds one lovC molecule to form the final active lovB-lovC megasynthase complex.

The enzyme catalyses holo-[lovastatin nonaketide synthase] + 9 malonyl-CoA + S-adenosyl-L-methionine + 11 NADPH + 19 H(+) = dihydromonacolin L-[lovastatin nonaketide synthase] + S-adenosyl-L-homocysteine + 9 CO2 + 11 NADP(+) + 9 CoA + 6 H2O. It functions in the pathway polyketide biosynthesis; lovastatin biosynthesis. Its function is as follows. Trans-enoyl reductase; part of the gene cluster that mediates the biosynthesis of lovastatin (also known as mevinolin, mevacor or monacolin K), a hypolipidemic inhibitor of (3S)-hydroxymethylglutaryl-coenzyme A (HMG-CoA) reductase (HMGR). The first step in the biosynthesis of lovastatin is the production of dihydromonacolin L acid (DML) by the lovastatin nonaketide synthase lovB and the trans-acting enoyl reductase lovC (called the lovB-lovC megasynthase complex) via condensation of one acetyl-CoA unit and 8 malonyl-CoA units. The formation of the LovB/C complex is essential for the integrity of the catalytic chamber to the complete total synthesis of DML acid. Dihydromonacolin L acid is released from lovB by the thioesterase lovG. Next, dihydromonacolin L acid is oxidized by the dihydromonacolin L monooxygenase lovA twice to form monacolin J acid. The 2-methylbutyrate moiety of lovastatin is synthesized by the lovastatin diketide synthase lovF via condensation of one acetyl-CoA unit and one malonyl-CoA unit. Finally, the covalent attachment of this moiety to monacolin J acid is catalyzed by the transesterase lovD to yield lovastatin. LovD has broad substrate specificity and can also convert monacolin J to simvastatin using alpha-dimethylbutanoyl-S-methyl-3-mercaptopropionate (DMB-S-MMP) as the thioester acyl donor, and can also catalyze the reverse reaction and function as hydrolase in vitro. LovD has much higher activity with LovF-bound 2-methylbutanoate than with free diketide substrates. This chain is Lovastatin nonaketide synthase, enoyl reductase component lovC, found in Aspergillus terreus.